The sequence spans 181 residues: Adenylate kinase (181 aa).

10 to 15 (GAGKGT) is an ATP binding site. An NMP region spans residues 30 to 59 (STGDLFRYNISNGTELGLEAKKYLDAGDLV). AMP contacts are provided by residues threonine 31, arginine 36, 57-59 (DLV), 85-88 (GYPR), and glutamine 92. Residues 126 to 132 (GRGRDDD) are LID. Residue arginine 127 coordinates ATP. The AMP site is built by arginine 129 and arginine 140. Glycine 166 contributes to the ATP binding site.

Belongs to the adenylate kinase family. Monomer.

The protein resides in the cytoplasm. It carries out the reaction AMP + ATP = 2 ADP. Its pathway is purine metabolism; AMP biosynthesis via salvage pathway; AMP from ADP: step 1/1. Its function is as follows. Catalyzes the reversible transfer of the terminal phosphate group between ATP and AMP. Plays an important role in cellular energy homeostasis and in adenine nucleotide metabolism. The polypeptide is Adenylate kinase (Mycolicibacterium vanbaalenii (strain DSM 7251 / JCM 13017 / BCRC 16820 / KCTC 9966 / NRRL B-24157 / PYR-1) (Mycobacterium vanbaalenii)).